Consider the following 549-residue polypeptide: Nectin-3 (549 aa).

An N-terminal signal peptide occupies residues 1-57; the sequence is MARTLRPSPLCPGGGKAQLSSASLLGAGLLLQPPTPPPLLLLLFPLLLFSRLCGALA. The Extracellular segment spans residues 58-404; the sequence is GPIIVEPHVT…ATIKDDTIAT (347 aa). In terms of domain architecture, Ig-like V-type spans 59 to 165; sequence PIIVEPHVTA…GNAQSSTTVT (107 aa). 6 N-linked (GlcNAc...) asparagine glycosylation sites follow: N73, N83, N125, N186, N222, and N331. The cysteines at positions 78 and 148 are disulfide-linked. 2 consecutive Ig-like C2-type domains span residues 170–258 and 269–354; these read PTVS…KDIR and PEVS…KVIY. Intrachain disulfides connect C193/C246 and C291/C338. A helical transmembrane segment spans residues 405-425; it reads IIASVVGGALFIVLVSVLAGI. The Cytoplasmic segment spans residues 426-549; the sequence is FCYRRRRTFR…SVISRREWYV (124 aa).

Belongs to the nectin family. In terms of assembly, cis- and trans-homodimer. Can form trans-heterodimers with NECTIN1, NECTIN2, PVR, IGSF4B/Necl-1 and with IGSF4. Interaction between NECTIN1 and NECTIN3 on the pre- and postsynaptic sites, respectively, initiates the formation of puncta adherentia junctions between axons and dendrites. Interacts (via Cytoplasmic domain) with AFDN, providing a connection with the actin cytoskeleton. Binds with low affinity to TIGIT. As to quaternary structure, (Microbial infection) Interacts with C.difficile toxin TcdB, suggesting that it may contribute to TcdB toxin entry into cells. It was however shown that NECTIN3/PVRL3 does not act as a major receptor for TcdB. As to expression, predominantly expressed in testis and placenta as well as in many cell lines, including epithelial cell lines.

It localises to the cell membrane. The protein resides in the postsynaptic cell membrane. The protein localises to the cell junction. It is found in the adherens junction. Functionally, cell adhesion molecule that promotes cell-cell adhesion through heterophilic trans-interactions with nectins-like or other nectins, such as trans-interaction with NECTIN2 at Sertoli-spermatid junctions. Trans-interaction with PVR induces activation of CDC42 and RAC small G proteins through common signaling molecules such as SRC and RAP1. Induces endocytosis-mediated down-regulation of PVR from the cell surface, resulting in reduction of cell movement and proliferation. Involved in axon guidance by promoting contacts between the commissural axons and the floor plate cells. Also involved in the formation of cell-cell junctions, including adherens junctions and synapses. Promotes formation of checkerboard-like cellular pattern of hair cells and supporting cells in the auditory epithelium via heterophilic interaction with NECTIN1: NECTIN1 is present in the membrane of hair cells and associates with NECTIN3 on supporting cells, thereby mediating heterotypic adhesion between these two cell types. Plays a role in the morphology of the ciliary body. This is Nectin-3 from Homo sapiens (Human).